The following is a 183-amino-acid chain: Capsid protein (183 aa).

Residues 143 to 183 (LPETTVVRRRGRSPRRRTPSPRRRRSKSPRRRRSQSRESQC) form a disordered region. Positions 149 to 176 (VRRRGRSPRRRTPSPRRRRSKSPRRRRS) are enriched in basic residues. 3 positions are modified to phosphoserine; by host: S155, S162, and S170. One copy of the 1; half-length repeat lies at 155–160 (SPRRRT). Positions 155–176 (SPRRRTPSPRRRRSKSPRRRRS) are 3 X 7 AA repeats of S-P-R-R-R-[PR]-S. A Bipartite nuclear localization signal motif is present at residues 158 to 175 (RRTPSPRRRRSKSPRRRR). 2 repeat units span residues 162–168 (SPRRRRS) and 170–176 (SPRRRRS). The segment at 177 to 183 (QSRESQC) is RNA binding.

Belongs to the orthohepadnavirus core antigen family. Homodimerizes, then multimerizes. Interacts with cytosol exposed regions of viral L glycoprotein present in the reticulum-to-Golgi compartment. Interacts with human FLNB. Phosphorylated form interacts with host importin alpha; this interaction depends on the exposure of the NLS, which itself depends upon genome maturation and/or phosphorylation of the capsid protein. Interacts with host NUP153. Post-translationally, phosphorylated by host SRPK1, SRPK2, and maybe protein kinase C or GAPDH. Phosphorylation is critical for pregenomic RNA packaging. Protein kinase C phosphorylation is stimulated by HBx protein and may play a role in transport of the viral genome to the nucleus at the late step during the viral replication cycle.

The protein localises to the virion. It localises to the host cytoplasm. Functionally, self assembles to form an icosahedral capsid. Most capsids appear to be large particles with an icosahedral symmetry of T=4 and consist of 240 copies of capsid protein, though a fraction forms smaller T=3 particles consisting of 180 capsid proteins. Entering capsids are transported along microtubules to the nucleus. Phosphorylation of the capsid is thought to induce exposure of nuclear localization signal in the C-terminal portion of the capsid protein that allows binding to the nuclear pore complex via the importin (karyopherin-) alpha and beta. Capsids are imported in intact form through the nuclear pore into the nuclear basket, where it probably binds NUP153. Only capsids that contain the mature viral genome can release the viral DNA and capsid protein into the nucleoplasm. Immature capsids get stuck in the basket. Capsids encapsulate the pre-genomic RNA and the P protein. Pre-genomic RNA is reverse-transcribed into DNA while the capsid is still in the cytoplasm. The capsid can then either be directed to the nucleus, providing more genomes for transcription, or bud through the endoplasmic reticulum to provide new virions. This chain is Capsid protein, found in Homo sapiens (Human).